Here is a 376-residue protein sequence, read N- to C-terminus: uncharacterized protein (376 aa).

At serine 59 the chain carries Phosphoserine. Residues 139–367 (VAIEITVQRQ…CLIEHHNAIF (229 aa)) enclose the Rho-GAP domain. The disordered stretch occupies residues 307 to 338 (RPSRSPKKSNDFETATPWDLLSDEGEGPDASS).

This is an uncharacterized protein from Arabidopsis thaliana (Mouse-ear cress).